We begin with the raw amino-acid sequence, 146 residues long: Transcriptional regulator MraZ (146 aa).

2 consecutive SpoVT-AbrB domains span residues 9–55 (ASAL…PRPA) and 81–124 (AMDV…DVQR).

This sequence belongs to the MraZ family. As to quaternary structure, forms oligomers.

The protein localises to the cytoplasm. The protein resides in the nucleoid. In Methylibium petroleiphilum (strain ATCC BAA-1232 / LMG 22953 / PM1), this protein is Transcriptional regulator MraZ.